Reading from the N-terminus, the 140-residue chain is Mediator of RNA polymerase II transcription subunit 21 (140 aa).

The stretch at 52 to 130 (EERERTLEEL…CDELILKLAQ (79 aa)) forms a coiled coil.

This sequence belongs to the Mediator complex subunit 21 family. As to quaternary structure, component of the Mediator complex.

The protein resides in the nucleus. Its function is as follows. Component of the Mediator complex, a coactivator involved in the regulated transcription of nearly all RNA polymerase II-dependent genes. Mediator functions as a bridge to convey information from gene-specific regulatory proteins to the basal RNA polymerase II transcription machinery. Mediator is recruited to promoters by direct interactions with regulatory proteins and serves as a scaffold for the assembly of a functional preinitiation complex with RNA polymerase II and the general transcription factors. The chain is Mediator of RNA polymerase II transcription subunit 21 (SRB7) from Yarrowia lipolytica (strain CLIB 122 / E 150) (Yeast).